Reading from the N-terminus, the 386-residue chain is MKIHEYQAKELFANYGVPVPKGKPVFSVDEAVEAAKELGDFPVVVKAQIHAGGRGKGGGVKLAQNIDEVKTIAGEILGMQLVTHQTGPEGQKVQKLLVEQGLDIAKELYFSIIVDRATAKIVIMCSEAGGMDIEEVAASTPEKIIKVPVDPLLGVQGYHCRQAAYRLNLPPAAIKPFIKMVQGLYKMFMDTDCSLLEINPLVLTGDDGIIALDAKINFDDSALYRHKDIQEYRDLDEEEPLEVEASKFNLNYIKMDGNVGNMVNGAGLAMATMDIIKQAGAEPANFLDVGGGANAEQVENGFRIILSDKNVKGILINIFGGILRCDVLASGVVEAAKKVGLNVPVVVRMEGTNVEEGRRILAESGLNLTGAEDLKDAAAKVAQIVQ.

One can recognise an ATP-grasp domain in the interval Lys-9–Glu-244. ATP contacts are provided by residues Lys-46, Gly-53–Gly-55, Glu-99, Leu-102, and Glu-107. Asn-199 and Asp-213 together coordinate Mg(2+). Substrate contacts are provided by residues Asn-264 and Gly-321 to Leu-323.

This sequence belongs to the succinate/malate CoA ligase beta subunit family. As to quaternary structure, heterotetramer of two alpha and two beta subunits. It depends on Mg(2+) as a cofactor.

It catalyses the reaction succinate + ATP + CoA = succinyl-CoA + ADP + phosphate. The enzyme catalyses GTP + succinate + CoA = succinyl-CoA + GDP + phosphate. The protein operates within carbohydrate metabolism; tricarboxylic acid cycle; succinate from succinyl-CoA (ligase route): step 1/1. Its function is as follows. Succinyl-CoA synthetase functions in the citric acid cycle (TCA), coupling the hydrolysis of succinyl-CoA to the synthesis of either ATP or GTP and thus represents the only step of substrate-level phosphorylation in the TCA. The beta subunit provides nucleotide specificity of the enzyme and binds the substrate succinate, while the binding sites for coenzyme A and phosphate are found in the alpha subunit. This is Succinate--CoA ligase [ADP-forming] subunit beta from Desulfatibacillum aliphaticivorans.